Reading from the N-terminus, the 656-residue chain is Ribosome quality control complex subunit 1 (656 aa).

Residues 1–11 are compositionally biased toward basic residues; it reads MSSRALRKLQR. 3 disordered regions span residues 1–35, 51–122, and 634–656; these read MSSRALRKLQRQRQTELLEEALDSESDEDDEFSST, NNAI…LESS, and LFTSTNSETEPAEESTEEMGQGD. Residues 17-32 are compositionally biased toward acidic residues; it reads LLEEALDSESDEDDEF. The span at 51-63 shows a compositional bias: basic and acidic residues; it reads NNAINSEAEKSVS. A phosphoserine mark is found at Ser-56, Ser-61, and Ser-63. Positions 83–101 are enriched in basic residues; that stretch reads KKAKNKKKKKKQQKKKKVT. Over residues 102–122 the composition is skewed to basic and acidic residues; it reads GKRDLDNQSSDNEKLEGLESS. Phosphoserine occurs at positions 110 and 111.

It belongs to the TCF25 family. As to quaternary structure, component of the ribosome quality control complex (RQC), composed of the E3 ubiquitin ligase rkr1/ltn1, rqc1 and mtr1/rqc2, as well as cdc48 and its ubiquitin-binding cofactors. RQC forms a stable complex with 60S ribosomal subunits.

It localises to the cytoplasm. In terms of biological role, component of the ribosome quality control complex (RQC), a ribosome-associated complex that mediates ubiquitination and extraction of incompletely synthesized nascent chains for proteasomal degradation. Within the RQC complex, rqc1 is essential for the recruitment of cdc48 to incompletely synthesized nascent polypeptides that are ubiquitinated by rkr1/ltn1. This Schizosaccharomyces pombe (strain 972 / ATCC 24843) (Fission yeast) protein is Ribosome quality control complex subunit 1.